The primary structure comprises 102 residues: Small ribosomal subunit protein uS10 (102 aa).

The tract at residues 34-59 is disordered; it reads QMSGPIPLPTKRLLVPTRKSPDGEGK.

Belongs to the universal ribosomal protein uS10 family. As to quaternary structure, part of the 30S ribosomal subunit.

Functionally, involved in the binding of tRNA to the ribosomes. This is Small ribosomal subunit protein uS10 from Methanopyrus kandleri (strain AV19 / DSM 6324 / JCM 9639 / NBRC 100938).